A 284-amino-acid chain; its full sequence is Elongation factor Ts (284 aa).

The interval 80-83 (TDFV) is involved in Mg(2+) ion dislocation from EF-Tu.

Belongs to the EF-Ts family.

It localises to the cytoplasm. In terms of biological role, associates with the EF-Tu.GDP complex and induces the exchange of GDP to GTP. It remains bound to the aminoacyl-tRNA.EF-Tu.GTP complex up to the GTP hydrolysis stage on the ribosome. In Neisseria meningitidis serogroup A / serotype 4A (strain DSM 15465 / Z2491), this protein is Elongation factor Ts.